Consider the following 138-residue polypeptide: Small ribosomal subunit protein uS11c (138 aa).

It belongs to the universal ribosomal protein uS11 family. In terms of assembly, part of the 30S ribosomal subunit.

The protein resides in the plastid. This Cuscuta gronovii (Common dodder) protein is Small ribosomal subunit protein uS11c.